A 339-amino-acid chain; its full sequence is 3-isopropylmalate dehydrogenase (339 aa).

Residues Arg-88, Arg-98, Arg-122, and Asp-212 each coordinate substrate. Asp-212, Asp-236, and Asp-240 together coordinate Mg(2+). 272-284 (GSAPDIAGQGIAD) provides a ligand contact to NAD(+).

It belongs to the isocitrate and isopropylmalate dehydrogenases family. LeuB type 2 subfamily. In terms of assembly, homodimer. Requires Mg(2+) as cofactor. The cofactor is Mn(2+).

The protein localises to the cytoplasm. It carries out the reaction (2R,3S)-3-isopropylmalate + NAD(+) = 4-methyl-2-oxopentanoate + CO2 + NADH. Its pathway is amino-acid biosynthesis; L-leucine biosynthesis; L-leucine from 3-methyl-2-oxobutanoate: step 3/4. In terms of biological role, catalyzes the oxidation of 3-carboxy-2-hydroxy-4-methylpentanoate (3-isopropylmalate) to 3-carboxy-4-methyl-2-oxopentanoate. The product decarboxylates to 4-methyl-2 oxopentanoate. The chain is 3-isopropylmalate dehydrogenase from Corynebacterium urealyticum (strain ATCC 43042 / DSM 7109).